A 631-amino-acid chain; its full sequence is tRNA uridine 5-carboxymethylaminomethyl modification enzyme MnmG (631 aa).

FAD is bound at residue 15 to 20 (GAGHAG). Positions 203–232 (TPPRVDGNTVDYSKTQEEPGDKEPRHFSYT) are disordered. The segment covering 216–232 (KTQEEPGDKEPRHFSYT) has biased composition (basic and acidic residues). 276 to 290 (GPRYCPSIEDKVVRF) contacts NAD(+).

This sequence belongs to the MnmG family. In terms of assembly, homodimer. Heterotetramer of two MnmE and two MnmG subunits. FAD serves as cofactor.

It is found in the cytoplasm. NAD-binding protein involved in the addition of a carboxymethylaminomethyl (cmnm) group at the wobble position (U34) of certain tRNAs, forming tRNA-cmnm(5)s(2)U34. This Lactobacillus gasseri (strain ATCC 33323 / DSM 20243 / BCRC 14619 / CIP 102991 / JCM 1131 / KCTC 3163 / NCIMB 11718 / NCTC 13722 / AM63) protein is tRNA uridine 5-carboxymethylaminomethyl modification enzyme MnmG.